A 118-amino-acid chain; its full sequence is Cobalt transport protein CbiN (118 aa).

A run of 2 helical transmembrane segments spans residues 7–27 and 70–90; these read INAL…VLGL and SALF…YFGL. The tract at residues 99-118 is disordered; that stretch reads ERASAASGAAAAPGDAPEGD. Residues 102 to 118 show a composition bias toward low complexity; it reads SAASGAAAAPGDAPEGD.

It belongs to the CbiN family. Forms an energy-coupling factor (ECF) transporter complex composed of an ATP-binding protein (A component, CbiO), a transmembrane protein (T component, CbiQ) and 2 possible substrate-capture proteins (S components, CbiM and CbiN) of unknown stoichimetry.

Its subcellular location is the cell membrane. Its pathway is cofactor biosynthesis; adenosylcobalamin biosynthesis. Functionally, part of the energy-coupling factor (ECF) transporter complex CbiMNOQ involved in cobalt import. The chain is Cobalt transport protein CbiN from Streptomyces coelicolor (strain ATCC BAA-471 / A3(2) / M145).